Consider the following 74-residue polypeptide: Protein SlyX homolog (74 aa).

The tract at residues 54–74 (QDRNPDAQEPYSLRDEIPPHY) is disordered.

It belongs to the SlyX family.

This is Protein SlyX homolog from Neisseria gonorrhoeae (strain ATCC 700825 / FA 1090).